The following is a 268-amino-acid chain: Taurine import ATP-binding protein TauB (268 aa).

The 233-residue stretch at Leu4–Val236 folds into the ABC transporter domain. Residue Gly41 to Thr48 participates in ATP binding.

Belongs to the ABC transporter superfamily. Taurine importer (TC 3.A.1.17.1) family. As to quaternary structure, the complex is composed of two ATP-binding proteins (TauB), two transmembrane proteins (TauC) and a solute-binding protein (TauA).

It localises to the cell inner membrane. It carries out the reaction taurine(out) + ATP + H2O = taurine(in) + ADP + phosphate + H(+). Part of the ABC transporter complex TauABC involved in taurine import. Responsible for energy coupling to the transport system. The chain is Taurine import ATP-binding protein TauB from Roseobacter denitrificans (strain ATCC 33942 / OCh 114) (Erythrobacter sp. (strain OCh 114)).